We begin with the raw amino-acid sequence, 186 residues long: Ribosome-recycling factor (186 aa).

Belongs to the RRF family.

It is found in the cytoplasm. Its function is as follows. Responsible for the release of ribosomes from messenger RNA at the termination of protein biosynthesis. May increase the efficiency of translation by recycling ribosomes from one round of translation to another. The polypeptide is Ribosome-recycling factor (Allorhizobium ampelinum (strain ATCC BAA-846 / DSM 112012 / S4) (Agrobacterium vitis (strain S4))).